Here is a 316-residue protein sequence, read N- to C-terminus: Olfactory receptor 10H4 (316 aa).

The Extracellular portion of the chain corresponds to 1–26; it reads MPSQNYSIISEFNLFGFSAFPQHLLP. Asn-5 is a glycosylation site (N-linked (GlcNAc...) asparagine). A helical transmembrane segment spans residues 27–47; it reads ILFLLYLLMFLFTLLGNLLIM. Topologically, residues 48-55 are cytoplasmic; sequence ATIWIEHR. A helical membrane pass occupies residues 56-76; that stretch reads LHTPMYLFLCTLSVSEILFTV. Over 77-100 the chain is Extracellular; it reads AITPRMLADLLSTHHSITFVACAN. The cysteines at positions 98 and 190 are disulfide-linked. The chain crosses the membrane as a helical span at residues 101–121; that stretch reads QMFFSFMFGFTHSFLLLVMGY. Topologically, residues 122–140 are cytoplasmic; sequence DRYVAICHPLRYNVLMSPR. A helical membrane pass occupies residues 141-161; that stretch reads DCAHLVACTWAGGSVMGMMVT. Residues 162 to 198 are Extracellular-facing; that stretch reads TIVFHLTFCGSNVIHHFFCHVLSLLKLACENKTSSVI. The helical transmembrane segment at 199 to 219 threads the bilayer; sequence MGVMLVCVTALIGCLFLIILS. The Cytoplasmic segment spans residues 220-239; sequence YVFIVAAILRIPSAEGRHKT. A helical transmembrane segment spans residues 240 to 260; sequence FSTCVSHLTVVVTHYSFASFI. The Extracellular segment spans residues 261–273; sequence YLKPKGLHSMYSD. A helical transmembrane segment spans residues 274-294; sequence ALMATTYTVFTPFLSPIIFSL. Residues 295–316 lie on the Cytoplasmic side of the membrane; sequence RNKELKNAINKNFYRKFCPPSS.

This sequence belongs to the G-protein coupled receptor 1 family.

The protein resides in the cell membrane. Functionally, odorant receptor. In Homo sapiens (Human), this protein is Olfactory receptor 10H4 (OR10H4).